A 967-amino-acid chain; its full sequence is Alanine--tRNA ligase, cytoplasmic (967 aa).

His605, His609, Cys724, and His728 together coordinate Zn(2+).

The protein belongs to the class-II aminoacyl-tRNA synthetase family. Monomer. It depends on Zn(2+) as a cofactor. In terms of processing, the N-terminus is blocked.

The protein localises to the cytoplasm. It catalyses the reaction tRNA(Ala) + L-alanine + ATP = L-alanyl-tRNA(Ala) + AMP + diphosphate. In terms of biological role, catalyzes the attachment of alanine to tRNA(Ala) in a two-step reaction: alanine is first activated by ATP to form Ala-AMP and then transferred to the acceptor end of tRNA(Ala). Also edits incorrectly charged tRNA(Ala) via its editing domain. The polypeptide is Alanine--tRNA ligase, cytoplasmic (Bombyx mori (Silk moth)).